The sequence spans 398 residues: Acetylornithine aminotransferase (398 aa).

Phenylalanine 129 serves as a coordination point for pyridoxal 5'-phosphate. Arginine 132 provides a ligand contact to N(2)-acetyl-L-ornithine. 214–217 (DEVQ) serves as a coordination point for pyridoxal 5'-phosphate. Position 243 is an N6-(pyridoxal phosphate)lysine (lysine 243). Serine 271 lines the N(2)-acetyl-L-ornithine pocket. A pyridoxal 5'-phosphate-binding site is contributed by threonine 272.

This sequence belongs to the class-III pyridoxal-phosphate-dependent aminotransferase family. ArgD subfamily. In terms of assembly, homodimer. Requires pyridoxal 5'-phosphate as cofactor.

The protein localises to the cytoplasm. The enzyme catalyses N(2)-acetyl-L-ornithine + 2-oxoglutarate = N-acetyl-L-glutamate 5-semialdehyde + L-glutamate. The protein operates within amino-acid biosynthesis; L-arginine biosynthesis; N(2)-acetyl-L-ornithine from L-glutamate: step 4/4. This is Acetylornithine aminotransferase from Neisseria meningitidis serogroup B (strain ATCC BAA-335 / MC58).